Reading from the N-terminus, the 464-residue chain is MAVYNYDVVVLGSGPAGEGAAMNAAKAGRKVAMVDSRRQVGGNCTHLGTIPSKALRHSVRQIMQFNTNPMFRAIGEPRWFSFPDVLKSAEKVISKQVASRTGYYARNRVDVFFGTGSFADEQTVEVVCANGVVEKLVAKHIIIATGSRPYRPADIDFSHPRIYDSDTILSLGHTPRKLIVYGAGVIGCEYASIFSGLGVLVELVDNRGQLLSFLDSEISQALSYHFSNNNITVRHNEEYDRVEGVDNGVILHLKSGKKIKADALLWCNGRTGNTDKLGMENIGVKVNSRGQIEVDENYRTCVPNIYGAGDVIGWPSLASAAHDQGRSAAGSIVDNGSWRFVNDVPTGIYTIPEISSIGKNEQELTQAKVPYEVGKAFFKGMARAQIAGEPQGMLKILFHRETLEVLGVHCFGYQASEIVHIGQAIMSQPGELNTLKYFVNTTFNYPTMAEAYRVAAYDGLNRLF.

35-44 (DSRRQVGGNC) contributes to the FAD binding site.

It belongs to the class-I pyridine nucleotide-disulfide oxidoreductase family. Requires FAD as cofactor.

The protein localises to the cytoplasm. It catalyses the reaction NAD(+) + NADPH = NADH + NADP(+). Its function is as follows. Conversion of NADPH, generated by peripheral catabolic pathways, to NADH, which can enter the respiratory chain for energy generation. This is Soluble pyridine nucleotide transhydrogenase from Pseudomonas fluorescens (strain ATCC BAA-477 / NRRL B-23932 / Pf-5).